We begin with the raw amino-acid sequence, 540 residues long: Phenylalanine--tRNA ligase beta subunit (540 aa).

One can recognise a B5 domain in the interval 268–343 (LQHKSIKITA…ITYGYNNLSP (76 aa)). Residues D321, D327, E330, and E331 each coordinate Mg(2+).

Belongs to the phenylalanyl-tRNA synthetase beta subunit family. Type 2 subfamily. In terms of assembly, tetramer of two alpha and two beta subunits. Mg(2+) serves as cofactor.

It is found in the cytoplasm. It catalyses the reaction tRNA(Phe) + L-phenylalanine + ATP = L-phenylalanyl-tRNA(Phe) + AMP + diphosphate + H(+). This chain is Phenylalanine--tRNA ligase beta subunit, found in Sulfurisphaera tokodaii (strain DSM 16993 / JCM 10545 / NBRC 100140 / 7) (Sulfolobus tokodaii).